We begin with the raw amino-acid sequence, 347 residues long: D-alanine--D-alanine ligase (347 aa).

Residues 131 to 333 enclose the ATP-grasp domain; it reads KRVLESAGIA…YPELIERLVD (203 aa). 161–216 contributes to the ATP binding site; sequence EEKLAYPVFAKPSNMGSSVGISKSENQEELRQALKLAFRYDSRVLVEQGVNAREIE. Mg(2+) contacts are provided by aspartate 287, glutamate 300, and asparagine 302.

The protein belongs to the D-alanine--D-alanine ligase family. It depends on Mg(2+) as a cofactor. The cofactor is Mn(2+).

Its subcellular location is the cytoplasm. The catalysed reaction is 2 D-alanine + ATP = D-alanyl-D-alanine + ADP + phosphate + H(+). The protein operates within cell wall biogenesis; peptidoglycan biosynthesis. Functionally, cell wall formation. This is D-alanine--D-alanine ligase from Streptococcus pneumoniae (strain P1031).